Reading from the N-terminus, the 131-residue chain is MRNHVLAASISMLSLLAIMGDTDSKTDSSFLMDSQRCMRHHYVDSISHPLYKCSSKMVLLARCEGHCSQASRSEPLVSFSTVLKQPFRSSCHCCRPQTSKLKALRLRCSGGMRLTATYRYILSCHCEECSS.

The first 24 residues, 1 to 24, serve as a signal peptide directing secretion; that stretch reads MRNHVLAASISMLSLLAIMGDTDS. 4 cysteine pairs are disulfide-bonded: C37–C94, C53–C108, C63–C124, and C67–C126. In terms of domain architecture, CTCK spans 37 to 130; that stretch reads CMRHHYVDSI…ILSCHCEECS (94 aa).

As to quaternary structure, homodimer; disulfide-linked. Component of a complex, at least composed of TSPAN12, FZD4, LRP5/6 and norrin (NDP). Binds FZD4 with high affinity. Interacts with LRP6 (via Beta-propellers 1 and 2). Expressed in the outer nuclear, inner nuclear and ganglion cell layers of the retina.

The protein localises to the secreted. Activates the canonical Wnt signaling pathway through FZD4 and LRP5 coreceptor. Plays a central role in retinal vascularization by acting as a ligand for FZD4 that signals via stabilizing beta-catenin (CTNNB1) and activating LEF/TCF-mediated transcriptional programs. Acts in concert with TSPAN12 to activate FZD4 independently of the Wnt-dependent activation of FZD4, suggesting the existence of a Wnt-independent signaling that also promote accumulation the beta-catenin (CTNNB1). May be involved in a pathway that regulates neural cell differentiation and proliferation. Possible role in neuroectodermal cell-cell interaction. The sequence is that of Norrin (Ndp) from Mus musculus (Mouse).